The sequence spans 296 residues: Arginase (296 aa).

The Mn(2+) site is built by His97, Asp120, His122, and Asp124. Substrate contacts are provided by residues 122–126 (HGDLN), 133–135 (SGN), and Asp176. Residues Asp223 and Asp225 each contribute to the Mn(2+) site. Thr237 and Glu268 together coordinate substrate.

It belongs to the arginase family. Mn(2+) serves as cofactor.

The enzyme catalyses L-arginine + H2O = urea + L-ornithine. It functions in the pathway nitrogen metabolism; urea cycle; L-ornithine and urea from L-arginine: step 1/1. Its function is as follows. Involved in the catabolism of arginine. This Bacillus subtilis (strain 168) protein is Arginase.